The sequence spans 329 residues: Centromere protein L (329 aa).

Phosphoserine is present on residues S40 and S54.

It belongs to the CENP-L/IML3 family. As to quaternary structure, component of the CENPA-CAD complex, composed of CENPI, CENPK, CENPL, CENPO, CENPP, CENPQ, CENPR and CENPS. The CENPA-CAD complex interacts with the CENPA-NAC complex, at least composed of CENPA, CENPC, CENPH, CENPM, CENPN, CENPT and CENPU.

It is found in the nucleus. The protein resides in the chromosome. Its subcellular location is the centromere. In terms of biological role, component of the CENPA-CAD (nucleosome distal) complex, a complex recruited to centromeres which is involved in assembly of kinetochore proteins, mitotic progression and chromosome segregation. May be involved in incorporation of newly synthesized CENPA into centromeres via its interaction with the CENPA-NAC complex. This Mus musculus (Mouse) protein is Centromere protein L (Cenpl).